The following is a 366-amino-acid chain: tRNA N6-adenosine threonylcarbamoyltransferase (366 aa).

The a divalent metal cation site is built by H130, H134, and Y151. Substrate-binding positions include 151–155 (YVSGG), D183, G198, E202, and N297. Residue D325 participates in a divalent metal cation binding.

It belongs to the KAE1 / TsaD family. In terms of assembly, component of the EKC/KEOPS complex composed of at least BUD32, CGI121, GON7, KAE1 and PCC1; the whole complex dimerizes. The cofactor is a divalent metal cation.

The protein resides in the cytoplasm. It localises to the nucleus. It carries out the reaction L-threonylcarbamoyladenylate + adenosine(37) in tRNA = N(6)-L-threonylcarbamoyladenosine(37) in tRNA + AMP + H(+). Functionally, component of the EKC/KEOPS complex that is required for the formation of a threonylcarbamoyl group on adenosine at position 37 (t(6)A37) in tRNAs that read codons beginning with adenine. The complex is probably involved in the transfer of the threonylcarbamoyl moiety of threonylcarbamoyl-AMP (TC-AMP) to the N6 group of A37. KAE1 likely plays a direct catalytic role in this reaction, but requires other protein(s) of the complex to fulfill this activity. The EKC/KEOPS complex also promotes both telomere uncapping and telomere elongation. The complex is required for efficient recruitment of transcriptional coactivators. This chain is tRNA N6-adenosine threonylcarbamoyltransferase, found in Cryptococcus neoformans var. neoformans serotype D (strain JEC21 / ATCC MYA-565) (Filobasidiella neoformans).